The sequence spans 499 residues: Probable cytosol aminopeptidase (499 aa).

Mn(2+) is bound by residues K267 and D272. The active site involves K279. D290, D349, and E351 together coordinate Mn(2+). R353 is a catalytic residue.

This sequence belongs to the peptidase M17 family. Mn(2+) is required as a cofactor.

The protein resides in the cytoplasm. It carries out the reaction Release of an N-terminal amino acid, Xaa-|-Yaa-, in which Xaa is preferably Leu, but may be other amino acids including Pro although not Arg or Lys, and Yaa may be Pro. Amino acid amides and methyl esters are also readily hydrolyzed, but rates on arylamides are exceedingly low.. It catalyses the reaction Release of an N-terminal amino acid, preferentially leucine, but not glutamic or aspartic acids.. In terms of biological role, presumably involved in the processing and regular turnover of intracellular proteins. Catalyzes the removal of unsubstituted N-terminal amino acids from various peptides. This chain is Probable cytosol aminopeptidase, found in Buchnera aphidicola subsp. Acyrthosiphon pisum (strain Tuc7).